A 226-amino-acid polypeptide reads, in one-letter code: 2-C-methyl-D-erythritol 4-phosphate cytidylyltransferase (226 aa).

It belongs to the IspD/TarI cytidylyltransferase family. IspD subfamily.

The catalysed reaction is 2-C-methyl-D-erythritol 4-phosphate + CTP + H(+) = 4-CDP-2-C-methyl-D-erythritol + diphosphate. Its pathway is isoprenoid biosynthesis; isopentenyl diphosphate biosynthesis via DXP pathway; isopentenyl diphosphate from 1-deoxy-D-xylulose 5-phosphate: step 2/6. Functionally, catalyzes the formation of 4-diphosphocytidyl-2-C-methyl-D-erythritol from CTP and 2-C-methyl-D-erythritol 4-phosphate (MEP). The protein is 2-C-methyl-D-erythritol 4-phosphate cytidylyltransferase of Parasynechococcus marenigrum (strain WH8102).